A 421-amino-acid polypeptide reads, in one-letter code: C2H2 type master regulator of conidiophore development brlA (421 aa).

2 consecutive C2H2-type zinc fingers follow at residues 309-333 (FKCK…MKSH) and 339-364 (HVCW…TKTH). Positions 379-421 (ESSPDYDPDFRGQLTPDGLPIRGSTLDDPMPNSREYSVDGLDD) are disordered.

It localises to the nucleus. BrlA, abaA and wetA are pivotal regulators of conidiophore development and conidium maturation. They act individually and together to regulate their own expression and that of numerous other sporulation-specific genes. Binds promoters of target genes at brlA response elements (BREs) containing the conserved sequence 5'-(C/A)(A/G)AGGG(G/A)-3'. Required for conidiophores formation. Controls expression of abaA. In Aspergillus oryzae (strain ATCC 42149 / RIB 40) (Yellow koji mold), this protein is C2H2 type master regulator of conidiophore development brlA.